The chain runs to 532 residues: MENELLNHPHNNNMVNGHQDAPYDALSMKNDAEMLEQIKQLLMENNNLKETMKQMNQEMKERLEELLKRHNQHLLDLNSANEVLRKELQSLKEKIATSNQGSAVCSTSEEASENKQLKNQLTRLQAEKADLLGLISELQLKLGSFSEDSFVEIGFSERESGEIVNEEKANKILSDHNISYRTNSIKEEGGGTEPEEVAISRLLRSLREETQKVERLEKELFSANKRLAELEKQTSEFCDKGVQTEQESEQSQSEVIISSEVDILKEKVKSLNKELQETNDKLNEAKQFKNSLQEKCILLDKRLQENQVDLEEKQSLRYSIKKLELQVESQESEIKLEQNKTEAEKNQLGILQVSYDKLNSEYQELRIREIEKVSKVEFNELLEKLDVCEKALAKKQFEIDEMREMDTKHEEDKETIELLRAQVDVYCADFHAERSARENIHQEKEQLATRLAYMIQEYEKLKEEMMGKQSIEQLQRRHGATSLLDASEGPYLVARGAANMEQPSITVYTCPKCNLTVPDMDTLQIHVMDCIT.

Coiled coils occupy residues 27–143 and 195–466; these read SMKN…LKLG and EEVA…EEMM. Residues 502 to 532 form a CCHC NOA-type zinc finger; that stretch reads QPSITVYTCPKCNLTVPDMDTLQIHVMDCIT. Residues Cys-510, Cys-513, His-526, and Cys-530 each coordinate Zn(2+).

Its subcellular location is the cytoplasm. It is found in the perinuclear region. The protein localises to the golgi apparatus. The protein resides in the trans-Golgi network. It localises to the cytoplasmic vesicle. Its subcellular location is the recycling endosome. It is found in the autophagosome. Probably part of the TNF-alpha signaling pathway that can shift the equilibrium toward induction of cell death. May act by regulating membrane trafficking and cellular morphogenesis. The sequence is that of Optineurin (optn) from Xenopus laevis (African clawed frog).